The chain runs to 465 residues: Sodium-dependent phosphate transport protein 1 (465 aa).

N39, N47, and N56 each carry an N-linked (GlcNAc...) asparagine glycan. Transmembrane regions (helical) follow at residues 79 to 99 (GLIL…VGYL), 117 to 137 (SLMS…VIVC), 176 to 196 (FVMG…LLGW), 199 to 219 (VFYI…FLFF), 260 to 280 (LPLW…SLLV), 304 to 324 (LPYL…DFFL), 337 to 356 (LFTT…LLYL), 363 to 383 (TVIF…GQLI), 399 to 419 (VTAL…GLIL), and 429 to 449 (KIFF…FLFA).

This sequence belongs to the major facilitator superfamily. Sodium/anion cotransporter family. Interacts with PDZK1. In terms of tissue distribution, kidney.

Its subcellular location is the apical cell membrane. It catalyses the reaction 3 Na(+)(out) + phosphate(out) = 3 Na(+)(in) + phosphate(in). The enzyme catalyses urate(out) = urate(in). Functionally, important for the resorption of phosphate by the kidney. May be involved in actively transporting phosphate into cells via Na(+) cotransport in the renal brush border membrane. Plays a role in urate transport in the kidney. The sequence is that of Sodium-dependent phosphate transport protein 1 (Slc17a1) from Mus musculus (Mouse).